Here is a 379-residue protein sequence, read N- to C-terminus: Cytochrome b (379 aa).

Transmembrane regions (helical) follow at residues 34–54, 78–99, 114–134, and 179–199; these read FGSL…FLAM, WLIR…YLHI, WNTG…GYVL, and FFTF…VHLL. Heme b contacts are provided by His-84 and His-98. Heme b is bound by residues His-183 and His-197. His-202 contributes to the a ubiquinone binding site. Helical transmembrane passes span 227-247, 289-309, 321-341, and 348-368; these read YKDL…TLFY, LGGV…PTLH, LTQT…WIGG, and FITI…ILMP.

It belongs to the cytochrome b family. As to quaternary structure, the cytochrome bc1 complex contains 3 respiratory subunits (MT-CYB, CYC1 and UQCRFS1), 2 core proteins (UQCRC1 and UQCRC2) and probably 6 low-molecular weight proteins. Heme b serves as cofactor.

Its subcellular location is the mitochondrion inner membrane. Functionally, component of the ubiquinol-cytochrome c reductase complex (complex III or cytochrome b-c1 complex) that is part of the mitochondrial respiratory chain. The b-c1 complex mediates electron transfer from ubiquinol to cytochrome c. Contributes to the generation of a proton gradient across the mitochondrial membrane that is then used for ATP synthesis. The protein is Cytochrome b (MT-CYB) of Glyptemys muhlenbergii (Bog turtle).